A 476-amino-acid chain; its full sequence is MKDTFVEKVDDFVKQHDVLKEHSTIVVGVSGGPDSLALLYYLLEKRAAKQFEIVVAHVDHMFRGDESHEDLQFVQDLCKGLGVICETIRINVSQYQQQYGMNAQVAARECRYAFLERIMKKYDARYVALGHHGDDQVETILMRLVRGSTPKGYAGIAVKRPFHNGYLIRPLLGVTKEEIVDYCNKLKIIPRIDPSNKKEVYTRNRLRKYVLPHLKEENPQVHEKFQKFSMQMQEDEAYLQELAFEKMNKVITKKSDKQISLSIPAFESMSMPLQRRGIQLILNYLYEYKIPSSLSSIHIDKVIEFFKRTQPSGSLDFPGDLKIVRAYEECSFGFKQEIVSPFLQDLSVPGTITLSNGDKLVTEVSEDIPSDMNETVFVAKYNDISYPLRIRSRENGDRMSIQGMNGTKKIKAIFIEAKVPREKREEWPVVCDASGNVIWLPLLKRSAFAISKETAKKDKYMIIHYKSKESSGRIMK.

Residue 30–35 (SGGPDS) coordinates ATP.

Belongs to the tRNA(Ile)-lysidine synthase family.

It localises to the cytoplasm. It catalyses the reaction cytidine(34) in tRNA(Ile2) + L-lysine + ATP = lysidine(34) in tRNA(Ile2) + AMP + diphosphate + H(+). In terms of biological role, ligates lysine onto the cytidine present at position 34 of the AUA codon-specific tRNA(Ile) that contains the anticodon CAU, in an ATP-dependent manner. Cytidine is converted to lysidine, thus changing the amino acid specificity of the tRNA from methionine to isoleucine. The sequence is that of tRNA(Ile)-lysidine synthase from Bacillus cereus (strain ZK / E33L).